A 586-amino-acid polypeptide reads, in one-letter code: Putative ABC transporter ATP-binding protein MG187 homolog (586 aa).

Positions 13–464 (IEFKNIVVDF…PANEFVATFL (452 aa)) constitute an ABC transporter domain. 45–52 (GPSGCGKT) provides a ligand contact to ATP.

The protein belongs to the ABC transporter superfamily.

This chain is Putative ABC transporter ATP-binding protein MG187 homolog, found in Mycoplasma pneumoniae (strain ATCC 29342 / M129 / Subtype 1) (Mycoplasmoides pneumoniae).